A 417-amino-acid chain; its full sequence is D-amino acid dehydrogenase (417 aa).

FAD is bound at residue Val-3 to Trp-17.

Belongs to the DadA oxidoreductase family. FAD is required as a cofactor.

The catalysed reaction is a D-alpha-amino acid + A + H2O = a 2-oxocarboxylate + AH2 + NH4(+). Its pathway is amino-acid degradation; D-alanine degradation; NH(3) and pyruvate from D-alanine: step 1/1. Oxidative deamination of D-amino acids. This is D-amino acid dehydrogenase from Pectobacterium atrosepticum (strain SCRI 1043 / ATCC BAA-672) (Erwinia carotovora subsp. atroseptica).